The chain runs to 546 residues: Phosphoglucomutase (546 aa).

Ser135 (phosphoserine intermediate) is an active-site residue. Mg(2+) is bound by residues Ser135, Asp288, Asp290, and Asp292.

The protein belongs to the phosphohexose mutase family. It depends on Mg(2+) as a cofactor.

It catalyses the reaction alpha-D-glucose 1-phosphate = alpha-D-glucose 6-phosphate. Its pathway is glycolipid metabolism; diglucosyl-diacylglycerol biosynthesis. In terms of biological role, catalyzes the interconversion between glucose-6-phosphate and alpha-glucose-1-phosphate. This is the first step in the biosynthesis of diglucosyl-diacylglycerol (Glc2-DAG), i.e. a glycolipid found in the membrane, which is also used as a membrane anchor for lipoteichoic acid (LTA). The protein is Phosphoglucomutase (pgcA) of Staphylococcus epidermidis (strain ATCC 35984 / DSM 28319 / BCRC 17069 / CCUG 31568 / BM 3577 / RP62A).